The sequence spans 361 residues: Zygote arrest protein 1 (361 aa).

2 disordered regions span residues 68-129 and 142-252; these read GPRP…PRSW and GLSS…EQDK. Positions 116-128 are enriched in low complexity; it reads PRSPARAGRPPRS. Thr155 carries the phosphothreonine modification. Over residues 238 to 252 the composition is skewed to basic and acidic residues; the sequence is ASRDRASPQSTEQDK. The 3CxxC-type zinc finger occupies 263–346; sequence KYGYYHCKDC…RQDLCGRCKD (84 aa).

The protein belongs to the ZAR1 family. In terms of assembly, interacts with YBX2. In terms of processing, phosphorylation by CDK1 does not regulate formation of MARDO (mitochondria-associated ribonucleoprotein domain) membraneless compartment. Ubiquitinated and degradaded by the proteasome during oocyte meiotic maturation, leading to MARDO (mitochondria-associated ribonucleoprotein domain) membraneless compartment dissolution.

The protein localises to the cytoplasm. It localises to the cytoplasmic ribonucleoprotein granule. Its function is as follows. mRNA-binding protein that mediates formation of MARDO (mitochondria-associated ribonucleoprotein domain), a membraneless compartment that stores maternal mRNAs in oocytes. MARDO assembly around mitochondria is directed by an increase in mitochondrial membrane potential during oocyte growth. Promotes formation of MARDO phase-separated membraneless compartment by undergoing liquid-liquid phase separation upon binding to maternal mRNAs. Binds to the 3'-UTR of maternal mRNAs. Maternal mRNAs stored in the MARDO are translationally repressed. Essential for female fertility and oocyte-to-embryo transition by coordinating maternal mRNA storage, translation and degradation. The protein is Zygote arrest protein 1 of Rattus norvegicus (Rat).